Consider the following 277-residue polypeptide: MAVKKYRPYTPSRRQMTTADFSGLTKKRPEKALTVPLPKTGGRNNHGRITSRFIGGGHKRLYRIIDFKRRDKANVPAKVAAIEYDPNRSARIALLHYVDGEKRYILAPEGLTVGQTVNAGPEAEPKLGNALPLRFVPVGAVVHAVELVPGKGAQLARSAGTSIQVQGKERDYVILRLPSGELRRIHSECYATIGTVGNAEHKNIVLGKAGRSRWLGRKPHQRGSAMNPVDHPHGGGEGRTGAGRVPVSPWGQPAKGLKTRKKRKISDRFIITRRGGK.

A disordered region spans residues 215-263 (LGRKPHQRGSAMNPVDHPHGGGEGRTGAGRVPVSPWGQPAKGLKTRKKR).

It belongs to the universal ribosomal protein uL2 family. In terms of assembly, part of the 50S ribosomal subunit. Forms a bridge to the 30S subunit in the 70S ribosome.

In terms of biological role, one of the primary rRNA binding proteins. Required for association of the 30S and 50S subunits to form the 70S ribosome, for tRNA binding and peptide bond formation. It has been suggested to have peptidyltransferase activity; this is somewhat controversial. Makes several contacts with the 16S rRNA in the 70S ribosome. This is Large ribosomal subunit protein uL2 from Deinococcus geothermalis (strain DSM 11300 / CIP 105573 / AG-3a).